The sequence spans 335 residues: Cathepsin B (335 aa).

An N-terminal signal peptide occupies residues 1-19; it reads MWQLLATLSCLLVLTSARS. The propeptide at 20–79 is activation peptide; it reads SLHFPPLSDEMVNYVNKQNTTWKAGHNFYNVDLSYVKKLCGAILGGPKLPQRDAFAADMV. 6 disulfides stabilise this stretch: Cys-93/Cys-122, Cys-105/Cys-150, Cys-141/Cys-207, Cys-142/Cys-146, Cys-179/Cys-211, and Cys-187/Cys-198. Cys-108 is a catalytic residue. Asn-192 carries N-linked (GlcNAc...) asparagine glycosylation. Position 220 is an N6-acetyllysine (Lys-220). Catalysis depends on residues His-278 and Asn-298. The propeptide occupies 333–335; the sequence is HQH.

The protein belongs to the peptidase C1 family. As to quaternary structure, dimer of a heavy chain and a light chain cross-linked by a disulfide bond. Interacts with SRPX2. Directly interacts with SHKBP1.

It localises to the lysosome. The protein localises to the melanosome. It is found in the secreted. Its subcellular location is the extracellular space. The protein resides in the apical cell membrane. The enzyme catalyses Hydrolysis of proteins with broad specificity for peptide bonds. Preferentially cleaves -Arg-Arg-|-Xaa bonds in small molecule substrates (thus differing from cathepsin L). In addition to being an endopeptidase, shows peptidyl-dipeptidase activity, liberating C-terminal dipeptides.. In terms of biological role, thiol protease which is believed to participate in intracellular degradation and turnover of proteins. Cleaves matrix extracellular phosphoglycoprotein MEPE. Involved in the solubilization of cross-linked TG/thyroglobulin in the thyroid follicle lumen. Has also been implicated in tumor invasion and metastasis. The protein is Cathepsin B (CTSB) of Ovis aries (Sheep).